The chain runs to 877 residues: Hopanoid transporter HpnN (877 aa).

Over 1–16 (MVTSLIVRLVAWSVRR) the chain is Cytoplasmic. Residues 17 to 37 (PVWVVVLSLLIAAFSGVYVAR) form a helical membrane-spanning segment. Residues 38–279 (HFKINTDISK…FSSVEDGAAL (242 aa)) lie on the Periplasmic side of the membrane. The helical transmembrane segment at 280–295 (NGVVTLLVVFVILWLA) threads the bilayer. Topologically, residues 296-299 (LRSK) are cytoplasmic. A helical transmembrane segment spans residues 300-323 (RMIASVLVTLFVGLVVTAALGLAM). The 127-residue stretch at 302 to 428 (IASVLVTLFV…LTLLPALLRL (127 aa)) folds into the SSD domain. The Periplasmic portion of the chain corresponds to 324-332 (VGSLNMISV). Residues 333 to 351 (AFMVLFVGLGVDFSIQYGV) traverse the membrane as a helical segment. At 352 to 373 (KYREERFRDERIDHALIGAAHS) the chain is on the cytoplasmic side. Residues 374-394 (MGMPLALATTAVAASFFSFIP) form a helical membrane-spanning segment. Residues 395-399 (TAYRG) are Periplasmic-facing. The helical transmembrane segment at 400 to 426 (VSELGLIAGVGMFVALLTTLTLLPALL) threads the bilayer. Residues 427-452 (RLFAPPGESKTPGFPWLAPVDDYLDR) are Cytoplasmic-facing. A helical membrane pass occupies residues 453 to 472 (HRKPILIGTLAVVIGALPLL). At 473-718 (AFLHFDFNPL…ILHSANTIIS (246 aa)) the chain is on the periplasmic side. A helical transmembrane segment spans residues 719-739 (AFLHAALWSIISITILLWITL). Residues 740–743 (RRFG) are Cytoplasmic-facing. A helical transmembrane segment spans residues 744 to 766 (DVLRTLVPLLVSGIVTLEMCVVL). Residues 767–774 (GMSLNFAN) are Periplasmic-facing. Residues 775 to 794 (IIALPLMLGVGVAFKVYFVM) traverse the membrane as a helical segment. Residues 795 to 809 (AWRAGQTGLLHSSLT) are Cytoplasmic-facing. Residues 810–827 (HAVLFSAATTATAFGSLW) traverse the membrane as a helical segment. Residues 828–836 (LSHHPGTSS) are Periplasmic-facing. Residues 837 to 858 (MGKLLALALTCTLIGAVVFQPV) traverse the membrane as a helical segment. The Cytoplasmic portion of the chain corresponds to 859 to 877 (LMGKPRVKRAKNQSQGINE).

The protein belongs to the resistance-nodulation-cell division (RND) (TC 2.A.6) family. MmpL subfamily. Homodimer.

Its subcellular location is the cell inner membrane. Essential for hopanoid transport from the cytoplasmic to the outer membrane. Is capable of shuttling hopanoid lipids from the inner membrane to the periplasm, where they probably spontaneously insert to the inner leaflet of the outer membrane, strengthening the cell envelope. May be a proton-motive-force (PMF)-dependent transporter. Is critical for multidrug resistance and cell wall remodeling in Burkholderia. The protein is Hopanoid transporter HpnN of Burkholderia multivorans (strain ATCC 17616 / 249).